The primary structure comprises 249 residues: 5'-nucleotidase SurE (249 aa).

A divalent metal cation-binding residues include Asp8, Asp9, Ser39, and Asn91.

Belongs to the SurE nucleotidase family. The cofactor is a divalent metal cation.

The protein resides in the cytoplasm. The enzyme catalyses a ribonucleoside 5'-phosphate + H2O = a ribonucleoside + phosphate. Its function is as follows. Nucleotidase that shows phosphatase activity on nucleoside 5'-monophosphates. This Pseudomonas entomophila (strain L48) protein is 5'-nucleotidase SurE.